We begin with the raw amino-acid sequence, 320 residues long: Zygote arrest protein 1 (320 aa).

Disordered stretches follow at residues 106–130 and 155–208; these read ELRRRRKLNPGPPGTPQKTEGEVRY and DRPA…AEGS. The segment at 222–305 adopts a 3CxxC-type zinc-finger fold; the sequence is KYGYYHCREC…RQDLCGRCKG (84 aa).

This sequence belongs to the ZAR1 family.

The protein resides in the cytoplasm. The protein localises to the cytoplasmic ribonucleoprotein granule. Its function is as follows. mRNA-binding protein required for maternal mRNA storage, translation and degradation during oocyte maturation. Probably promotes formation of some phase-separated membraneless compartment that stores maternal mRNAs in oocytes: acts by undergoing liquid-liquid phase separation upon binding to maternal mRNAs. Binds to the 3'-UTR of maternal mRNAs, inhibiting their translation. In Takifugu rubripes (Japanese pufferfish), this protein is Zygote arrest protein 1.